Reading from the N-terminus, the 140-residue chain is MEIDYYDYEKLLEKAYEELPENVKHHKSRFEVPGALVTIEGNKTIIENFKDIAEALNRDPQHLLKFLLREIATAGTLEGKRVVLQGRFTPYLIANKLKKYIKEYVICPVCGSPDTKIIKRDRFYFLKCEACGAETPIQHL.

This sequence belongs to the eIF-2-beta/eIF-5 family. In terms of assembly, heterotrimer composed of an alpha, a beta and a gamma chain.

EIF-2 functions in the early steps of protein synthesis by forming a ternary complex with GTP and initiator tRNA. This Pyrococcus horikoshii (strain ATCC 700860 / DSM 12428 / JCM 9974 / NBRC 100139 / OT-3) protein is Translation initiation factor 2 subunit beta (eif2b).